The following is a 336-amino-acid chain: NADH-quinone oxidoreductase subunit H (336 aa).

Helical transmembrane passes span 4–24 (YILWTSLYVLLIVIPLILVVA), 75–95 (YLFFIAPILAFAPAYAAWAVI), 108–128 (LGLLYILAMTSFSIYGIVIAG), 154–174 (MGFAIVGVVIAAGSMGITGII), 181–201 (IWHWYFIPLFPLFIVYFIAGI), 233–253 (LFFLAEYANMILISILTSIMF), 272–292 (FVPGVVWLFAKTGIFMFMFLW), and 308–328 (LGWKIFIPLTFVWVVIVACMV).

The protein belongs to the complex I subunit 1 family. As to quaternary structure, NDH-1 is composed of 14 different subunits. Subunits NuoA, H, J, K, L, M, N constitute the membrane sector of the complex.

Its subcellular location is the cell inner membrane. The enzyme catalyses a quinone + NADH + 5 H(+)(in) = a quinol + NAD(+) + 4 H(+)(out). In terms of biological role, NDH-1 shuttles electrons from NADH, via FMN and iron-sulfur (Fe-S) centers, to quinones in the respiratory chain. The immediate electron acceptor for the enzyme in this species is believed to be ubiquinone. Couples the redox reaction to proton translocation (for every two electrons transferred, four hydrogen ions are translocated across the cytoplasmic membrane), and thus conserves the redox energy in a proton gradient. This subunit may bind ubiquinone. The sequence is that of NADH-quinone oxidoreductase subunit H from Francisella tularensis subsp. tularensis (strain FSC 198).